The primary structure comprises 213 residues: Ribosomal RNA small subunit methyltransferase G (213 aa).

S-adenosyl-L-methionine contacts are provided by residues glycine 77, phenylalanine 82, 130–131 (IE), and arginine 146.

The protein belongs to the methyltransferase superfamily. RNA methyltransferase RsmG family.

Its subcellular location is the cytoplasm. It catalyses the reaction guanosine(527) in 16S rRNA + S-adenosyl-L-methionine = N(7)-methylguanosine(527) in 16S rRNA + S-adenosyl-L-homocysteine. Its function is as follows. Specifically methylates the N7 position of guanine in position 527 of 16S rRNA. The protein is Ribosomal RNA small subunit methyltransferase G of Bartonella tribocorum (strain CIP 105476 / IBS 506).